The sequence spans 1512 residues: DNA (cytosine-5)-methyltransferase 2 (1512 aa).

A compositionally biased stretch (basic and acidic residues) spans 1–22 (METKVGKQKKRSVDSNDDVSKE). Disordered regions lie at residues 1–35 (METKVGKQKKRSVDSNDDVSKERRPKRAAACRNFK) and 634–678 (AIHE…GNSE). A compositionally biased stretch (acidic residues) spans 638–662 (VEEEEIEEDEEEDENEEDDIEEEAV). BAH domains lie at 707 to 841 (ETVA…FSLP) and 909 to 1026 (TTLK…KQFP). In terms of domain architecture, SAM-dependent MTase C5-type spans 1071-1505 (LATLDIFAGC…RKLKEALYLK (435 aa)). The active site involves C1176.

The protein belongs to the class I-like SAM-binding methyltransferase superfamily. C5-methyltransferase family. As to expression, expressed at low levels in vegetative and floral organs.

It is found in the nucleus. It carries out the reaction a 2'-deoxycytidine in DNA + S-adenosyl-L-methionine = a 5-methyl-2'-deoxycytidine in DNA + S-adenosyl-L-homocysteine + H(+). Functionally, maintains chromatin CpG methylation that plays a role in genomic imprinting, regulation of embryogenesis and seed viability. Required for proper patterns of CG DNA methylation in dividing cells. The sequence is that of DNA (cytosine-5)-methyltransferase 2 (MET2) from Arabidopsis thaliana (Mouse-ear cress).